Reading from the N-terminus, the 204-residue chain is Leucyl/phenylalanyl-tRNA--protein transferase (204 aa).

This sequence belongs to the L/F-transferase family.

It localises to the cytoplasm. It carries out the reaction N-terminal L-lysyl-[protein] + L-leucyl-tRNA(Leu) = N-terminal L-leucyl-L-lysyl-[protein] + tRNA(Leu) + H(+). The enzyme catalyses N-terminal L-arginyl-[protein] + L-leucyl-tRNA(Leu) = N-terminal L-leucyl-L-arginyl-[protein] + tRNA(Leu) + H(+). It catalyses the reaction L-phenylalanyl-tRNA(Phe) + an N-terminal L-alpha-aminoacyl-[protein] = an N-terminal L-phenylalanyl-L-alpha-aminoacyl-[protein] + tRNA(Phe). Functions in the N-end rule pathway of protein degradation where it conjugates Leu, Phe and, less efficiently, Met from aminoacyl-tRNAs to the N-termini of proteins containing an N-terminal arginine or lysine. In Rhizobium leguminosarum bv. trifolii (strain WSM2304), this protein is Leucyl/phenylalanyl-tRNA--protein transferase.